The chain runs to 289 residues: ATP synthase gamma chain (289 aa).

This sequence belongs to the ATPase gamma chain family. As to quaternary structure, F-type ATPases have 2 components, CF(1) - the catalytic core - and CF(0) - the membrane proton channel. CF(1) has five subunits: alpha(3), beta(3), gamma(1), delta(1), epsilon(1). CF(0) has three main subunits: a, b and c.

It is found in the cell inner membrane. Its function is as follows. Produces ATP from ADP in the presence of a proton gradient across the membrane. The gamma chain is believed to be important in regulating ATPase activity and the flow of protons through the CF(0) complex. The chain is ATP synthase gamma chain from Aromatoleum aromaticum (strain DSM 19018 / LMG 30748 / EbN1) (Azoarcus sp. (strain EbN1)).